We begin with the raw amino-acid sequence, 205 residues long: Large ribosomal subunit protein uL3c (205 aa).

The segment at 130–150 is disordered; it reads RGPMSHGSKNHRQPGSIGAGT.

This sequence belongs to the universal ribosomal protein uL3 family. As to quaternary structure, part of the 50S ribosomal subunit.

It localises to the plastid. Its subcellular location is the chloroplast. Its function is as follows. One of the primary rRNA binding proteins, it binds directly near the 3'-end of the 23S rRNA, where it nucleates assembly of the 50S subunit. The polypeptide is Large ribosomal subunit protein uL3c (rpl3) (Gracilaria tenuistipitata var. liui (Red alga)).